A 177-amino-acid chain; its full sequence is ECF RNA polymerase sigma factor SigL (177 aa).

The tract at residues 18-85 is sigma-70 factor domain-2; it reads LYDEHAAVLW…MIIDERRSAR (68 aa). Positions 42 to 45 match the Interaction with polymerase core subunit RpoC motif; the sequence is DVVQ. The interval 119-167 is sigma-70 factor domain-4; that stretch reads ALAQLSAEHRAVIQRSYYRGWSTAQIATDLGIAEGTVKSRLHYAVRALR. The segment at residues 141-160 is a DNA-binding region (H-T-H motif); it reads TAQIATDLGIAEGTVKSRLH.

The protein belongs to the sigma-70 factor family. ECF subfamily. Interacts transiently with the RNA polymerase catalytic core formed by RpoA, RpoB, RpoC and RpoZ (2 alpha, 1 beta, 1 beta' and 1 omega subunit) to form the RNA polymerase holoenzyme that can initiate transcription. Interacts (via sigma-70 factor domain 4) with anti-sigma-L factor RslA.

In terms of biological role, sigma factors are initiation factors that promote the attachment of RNA polymerase to specific initiation sites and are then released. Extracytoplasmic function (ECF) sigma factors are held in an inactive form by an anti-sigma factor until released by regulated intramembrane proteolysis. The sequence is that of ECF RNA polymerase sigma factor SigL (sigL) from Mycobacterium tuberculosis (strain ATCC 35801 / TMC 107 / Erdman).